The sequence spans 380 residues: Cytochrome b (380 aa).

The next 4 membrane-spanning stretches (helical) occupy residues 33–53 (FGSL…FLAM), 77–98 (WLIR…FLHV), 113–133 (WNMG…GYVL), and 178–198 (FFAF…VHLL). Heme b-binding residues include His83 and His97. Heme b contacts are provided by His182 and His196. His201 serves as a coordination point for a ubiquinone. 4 consecutive transmembrane segments (helical) span residues 226 to 246 (IKDF…VLFF), 288 to 308 (LGGV…PLLH), 320 to 340 (ITQT…WIGG), and 347 to 367 (FIMI…IFMP).

The protein belongs to the cytochrome b family. As to quaternary structure, the cytochrome bc1 complex contains 11 subunits: 3 respiratory subunits (MT-CYB, CYC1 and UQCRFS1), 2 core proteins (UQCRC1 and UQCRC2) and 6 low-molecular weight proteins (UQCRH/QCR6, UQCRB/QCR7, UQCRQ/QCR8, UQCR10/QCR9, UQCR11/QCR10 and a cleavage product of UQCRFS1). This cytochrome bc1 complex then forms a dimer. Heme b is required as a cofactor.

The protein resides in the mitochondrion inner membrane. In terms of biological role, component of the ubiquinol-cytochrome c reductase complex (complex III or cytochrome b-c1 complex) that is part of the mitochondrial respiratory chain. The b-c1 complex mediates electron transfer from ubiquinol to cytochrome c. Contributes to the generation of a proton gradient across the mitochondrial membrane that is then used for ATP synthesis. The sequence is that of Cytochrome b (MT-CYB) from Chionomys roberti (Robert's snow vole).